The chain runs to 488 residues: Transcriptional coactivator YAP1 (488 aa).

Residues 1 to 21 (MEPAQQPPPQPAPQGPAPPSV) show a composition bias toward pro residues. The segment at 1 to 47 (MEPAQQPPPQPAPQGPAPPSVSPAGTPAAPPAPPAGHQVVHVRGDSE) is disordered. Position 46 is a phosphoserine (serine 46). Position 48 is a phosphothreonine (threonine 48). Residues 71-85 (MRLRKLPDSFFKPPE) are a coiled coil. Lysine 75 is modified (N6-lactoyllysine). The disordered stretch occupies residues 76–99 (LPDSFFKPPEPKSHSRQASTDAGT). Serine 90 and serine 94 each carry phosphoserine. Threonine 95 bears the Phosphothreonine mark. Threonine 104 is subject to Phosphothreonine; by MAPK8 and MAPK9. Residues serine 112, serine 113, serine 116, and serine 123 each carry the phosphoserine modification. Serine 149 is subject to Phosphoserine; by LATS1 and LATS2. WW domains are found at residues 156–189 (VPLP…DPRK) and 215–248 (GPLP…DPRL). 2 disordered regions span residues 261-293 (SAPV…QIQL) and 339-393 (TLEQ…SSYS). Position 274 is a phosphoserine (serine 274). Positions 276-488 (QGGVLGGGSS…LDKESFLTWL (213 aa)) are transactivation domain. Residues 283 to 344 (GSSNQQQQIQ…SQLPTLEQDG (62 aa)) adopt a coiled-coil conformation. The segment covering 348-376 (NAVSSPGMSQELRTMTTNSSDPFLNSGTY) has biased composition (polar residues). Serine 352 carries the phosphoserine; by MAPK8 and MAPK9 modification. Phosphoserine occurs at positions 356, 366, 367, and 373. At serine 382 the chain carries Phosphoserine; by LATS1 and LATS2. A compositionally biased stretch (polar residues) spans 384-393 (DSGLSMSSYS). Serine 385 and serine 388 each carry phosphoserine; by CK1. Tyrosine 392 is subject to Phosphotyrosine; by ABL1. Threonine 397 is subject to Phosphothreonine; by MAPK8 and MAPK9.

It belongs to the YAP1 family. As to quaternary structure, part of a complex when phosphorylated that contains DSG3, PKP1, YAP1 and YWHAG; the complex is required for localization of DSG3 and YAP1 to the cell membrane in keratinocytes. Binds to the SH3 domain of the YES kinase. Binds to WBP1 and WBP2. Binds, in vitro, through the WW1 domain, to neural isoforms of ENAH that contain the PPSY motif. The phosphorylated form interacts with YWHAB. Interacts (via WW domains) with LATS1 (via PPxY motif 2). Interacts with LATS2. Interacts (via WW domain 1) with isoform JM-A of ERBB4 (via PPxY motif 2). Interacts with TEAD1, TEAD2 and TEAD3. Interacts with TP73 and HCK. Interacts with RUNX1. Interacts with TEAD4. Interacts (via WW domains) with PTPN14 (via PPxY motif 2); this interaction leads to the cytoplasmic sequestration of YAP1 and inhibits its transcriptional coactivator activity. Interacts (when phosphorylated at Ser-112) with SMAD2, SMAD3 and WWTR1. Interacts with PRRG2 (via cytoplasmic domain). Interacts (via WW domains) with PRRG4 (via cytoplasmic domain). Interacts (phosphorylated) with CLDN18; the interaction sequesters YAP1 away from the nucleus and thereby restricts transcription of YAP1 target genes. Interacts with SMAD1. Interacts with AMOT; the interaction facilitates translocation of YAP1 to the cytoplasm and tight junctions. Interacts with AMOTL2, the interaction is required for ubiquitination of AMOTL2 and localization of YAP1 to tight junctions. Post-translationally, phosphorylated by LATS1 and LATS2; leading to cytoplasmic translocation and inactivation. Phosphorylated by ABL1; leading to YAP1 stabilization, enhanced interaction with TP73 and recruitment onto proapoptotic genes; in response to DNA damage. Phosphorylation at Ser-385 and Ser-388 by CK1 is triggered by previous phosphorylation at Ser-382 by LATS proteins and leads to YAP1 ubiquitination by SCF(beta-TRCP) E3 ubiquitin ligase and subsequent degradation. Phosphorylated at Thr-104, Ser-123, Ser-352 and Thr-397 by MAPK8/JNK1 and MAPK9/JNK2, which is required for the regulation of apoptosis by YAP1. Lactylation by AARS1 promotes nuclear localization and stabilization of YAP1, leading to increased Hippo signaling pathway. Delactylated by SIRT1. In terms of processing, ubiquitinated by SCF(beta-TRCP) E3 ubiquitin ligase. Isoforms lacking the transactivation domain seen in striatal neurons (at protein level). Ubiquitous. Isoform 2 is expressed at higher levels in the neural tissues. In the embryo, it is expressed in brain, eye, and the maxillary and frontonasal components of the primary palate.

It is found in the cytoplasm. Its subcellular location is the nucleus. The protein resides in the cell junction. The protein localises to the tight junction. It localises to the cell membrane. Functionally, transcriptional regulator with dual roles as a coactivator and corepressor. Critical downstream regulatory target in the Hippo signaling pathway, crucial for organ size control and tumor suppression by restricting proliferation and promoting apoptosis. The Hippo signaling pathway core involves a kinase cascade featuring STK3/MST2 and STK4/MST1, along with its regulatory partner SAV1, which phosphorylates and activates LATS1/2 in complex with their regulatory protein, MOB1. This activation leads to the phosphorylation and inactivation of the YAP1 oncoprotein and WWTR1/TAZ. Phosphorylation of YAP1 by LATS1/2 prevents its nuclear translocation, thereby regulating the expression of its target genes. The transcriptional regulation of gene expression requires TEAD transcription factors and modulates cell growth, anchorage-independent growth, and induction of epithelial-mesenchymal transition (EMT). Plays a key role in tissue tension and 3D tissue shape by regulating the cortical actomyosin network, acting via ARHGAP18, a Rho GTPase activating protein that suppresses F-actin polymerization. It also suppresses ciliogenesis by acting as a transcriptional corepressor of TEAD4 target genes AURKA and PLK1. In conjunction with WWTR1, regulates TGFB1-dependent SMAD2 and SMAD3 nuclear accumulation. Synergizes with WBP2 to enhance PGR activity. This is Transcriptional coactivator YAP1 (Yap1) from Mus musculus (Mouse).